Here is a 1018-residue protein sequence, read N- to C-terminus: Serine/threonine-protein kinase 31 (1018 aa).

The Tudor domain occupies 78–137 (NLDPKKIYGGLFSEDKCWYRCKVLKTISDDKCLVRYIDYGNTEILNRSDIVEIPPELQFS). The stretch at 298–358 (AKIKQDQKLI…TKHLESTLKT (61 aa)) forms a coiled coil. The Protein kinase domain occupies 711 to 1018 (IGLLKYMNSG…EKTRNGEANP (308 aa)). ATP contacts are provided by residues 717–725 (MNSGGLLTM) and Lys-738. The disordered stretch occupies residues 988 to 1018 (IECTQHSREDESKMESLDRYSEKTRNGEANP).

The protein belongs to the protein kinase superfamily. Ser/Thr protein kinase family. Testis specific. Expressed only in male germ cells.

The enzyme catalyses L-seryl-[protein] + ATP = O-phospho-L-seryl-[protein] + ADP + H(+). It catalyses the reaction L-threonyl-[protein] + ATP = O-phospho-L-threonyl-[protein] + ADP + H(+). In Mus musculus (Mouse), this protein is Serine/threonine-protein kinase 31 (Stk31).